We begin with the raw amino-acid sequence, 221 residues long: Histidine biosynthesis bifunctional protein HisIE (221 aa).

Residues 1–129 are phosphoribosyl-AMP cyclohydrolase; that stretch reads MAYSKNFSIE…AKKTSPFSNI (129 aa). A phosphoribosyl-ATP pyrophosphohydrolase region spans residues 130–221; sequence CSELFDTLHE…VLESRRGKNN (92 aa).

This sequence in the N-terminal section; belongs to the PRA-CH family. It in the C-terminal section; belongs to the PRA-PH family.

Its subcellular location is the cytoplasm. It carries out the reaction 1-(5-phospho-beta-D-ribosyl)-ATP + H2O = 1-(5-phospho-beta-D-ribosyl)-5'-AMP + diphosphate + H(+). The enzyme catalyses 1-(5-phospho-beta-D-ribosyl)-5'-AMP + H2O = 1-(5-phospho-beta-D-ribosyl)-5-[(5-phospho-beta-D-ribosylamino)methylideneamino]imidazole-4-carboxamide. Its pathway is amino-acid biosynthesis; L-histidine biosynthesis; L-histidine from 5-phospho-alpha-D-ribose 1-diphosphate: step 2/9. The protein operates within amino-acid biosynthesis; L-histidine biosynthesis; L-histidine from 5-phospho-alpha-D-ribose 1-diphosphate: step 3/9. This Prochlorococcus marinus subsp. pastoris (strain CCMP1986 / NIES-2087 / MED4) protein is Histidine biosynthesis bifunctional protein HisIE.